Consider the following 297-residue polypeptide: Cyclin-dependent kinase 1 (297 aa).

Residue M1 is modified to N-acetylmethionine. Y4 is subject to Phosphotyrosine; by PKR. A Protein kinase domain is found at Y4 to F287. K6 and K9 each carry N6-acetyllysine; alternate. Residues K6 and K9 each participate in a glycyl lysine isopeptide (Lys-Gly) (interchain with G-Cter in SUMO2); alternate cross-link. I10–V18 serves as a coordination point for ATP. T14 bears the Phosphothreonine; by PKMYT1 mark. Y15 carries the phosphotyrosine; by PKMYT1, WEE1 and WEE2 modification. Residue Y15 is modified to Phosphotyrosine; by WEE1 and WEE2. Y19 carries the phosphotyrosine modification. K20 is covalently cross-linked (Glycyl lysine isopeptide (Lys-Gly) (interchain with G-Cter in SUMO2)). K33 is an ATP binding site. At S39 the chain carries Phosphoserine. Y77 carries the post-translational modification Phosphotyrosine. D128 serves as the catalytic Proton acceptor. Residue K139 forms a Glycyl lysine isopeptide (Lys-Gly) (interchain with G-Cter in SUMO2) linkage. Phosphothreonine is present on T141. A Phosphothreonine; by CAK modification is found at T161. Phosphoserine is present on S178. Residue T222 is modified to Phosphothreonine. Position 245 is an N6-succinyllysine (K245). A Phosphoserine modification is found at S248.

Belongs to the protein kinase superfamily. CMGC Ser/Thr protein kinase family. CDC2/CDKX subfamily. Forms a stable but non-covalent complex with a regulatory subunit and with a cyclin. Interacts with cyclins-B (CCNB1, CCNB2 and CCNB3) to form a serine/threonine kinase holoenzyme complex also known as maturation promoting factor (MPF). The cyclin subunit imparts substrate specificity to the complex. Can also form CDK1-cylin-D and CDK1-cyclin-E complexes that phosphorylate RB1 in vitro. Binds to RB1 and other transcription factors such as FOXO1 and RUNX2. Promotes G2-M transition when in complex with a cyclin-B. Interacts with DLGAP5. Binds to the CDK inhibitors CDKN1A/p21 and CDKN1B/p27. Isoform 2 is unable to complex with cyclin-B1 and also fails to bind to CDKN1A/p21. Interacts with catalytically active CCNB1 and RALBP1 during mitosis to form an endocytotic complex during interphase. Associates with cyclins-A and B1 during S-phase in regenerating hepatocytes. Interacts with FANCC. Interacts with CEP63; this interaction recruits CDK1 to centrosomes. Interacts with CENPA. Interacts with NR1D1. Interacts with proteasome subunit PSMA8; to participate in meiosis progression during spermatogenesis. Phosphorylation at Thr-161 by CAK/CDK7 activates kinase activity. Phosphorylation at Thr-14 and Tyr-15 by PKMYT1 prevents nuclear translocation. Phosphorylation at Tyr-15 by WEE1 and WEE2 inhibits the protein kinase activity and acts as a negative regulator of entry into mitosis (G2 to M transition). Phosphorylation by PKMYT1 and WEE1 takes place during mitosis to keep CDK1-cyclin-B complexes inactive until the end of G2. By the end of G2, PKMYT1 and WEE1 are inactivated, but CDC25A and CDC25B are activated. Dephosphorylation by active CDC25A and CDC25B at Thr-14 and Tyr-15, leads to CDK1 activation at the G2-M transition. Phosphorylation at Tyr-15 by WEE2 during oogenesis is required to maintain meiotic arrest in oocytes during the germinal vesicle (GV) stage, a long period of quiescence at dictyate prophase I, leading to prevent meiotic reentry. Phosphorylation by WEE2 is also required for metaphase II exit during egg activation to ensure exit from meiosis in oocytes and promote pronuclear formation. Phosphorylated at Tyr-4 by PKR/EIF2AK2 upon genotoxic stress. This phosphorylation triggers CDK1 polyubiquitination and subsequent proteolysis, thus leading to G2 arrest. In terms of processing, polyubiquitinated upon genotoxic stress.

It is found in the nucleus. The protein resides in the cytoplasm. The protein localises to the mitochondrion. It localises to the cytoskeleton. Its subcellular location is the microtubule organizing center. It is found in the centrosome. The protein resides in the spindle. The catalysed reaction is L-seryl-[protein] + ATP = O-phospho-L-seryl-[protein] + ADP + H(+). The enzyme catalyses L-threonyl-[protein] + ATP = O-phospho-L-threonyl-[protein] + ADP + H(+). It catalyses the reaction [DNA-directed RNA polymerase] + ATP = phospho-[DNA-directed RNA polymerase] + ADP + H(+). With respect to regulation, phosphorylation at Thr-14 or Tyr-15 inactivates the enzyme, while phosphorylation at Thr-161 activates it. Activated through a multistep process; binding to cyclin-B is required for relocation of cyclin-kinase complexes to the nucleus, activated by CAK/CDK7-mediated phosphorylation on Thr-161, and CDC25-mediated dephosphorylation of inhibitory phosphorylation on Thr-14 and Tyr-15. Activity is restricted during S-phase in an ATR-dependent manner to prevent premature entry into G2. Repressed by the CDK inhibitors CDKN1A/p21 and CDKN1B/p27 during the G1 phase and by CDKN1A/p21 at the G1-S checkpoint upon DNA damage. Transient activation by rapid and transient dephosphorylation at Tyr-15 triggered by TGFB1. Its function is as follows. Plays a key role in the control of the eukaryotic cell cycle by modulating the centrosome cycle as well as mitotic onset; promotes G2-M transition via association with multiple interphase cyclins. Phosphorylates PARVA/actopaxin, APC, AMPH, APC, BARD1, Bcl-xL/BCL2L1, BRCA2, CALD1, CASP8, CDC7, CDC20, CDC25A, CDC25C, CC2D1A, CENPA, CSNK2 proteins/CKII, FZR1/CDH1, CDK7, CEBPB, CHAMP1, DMD/dystrophin, EEF1 proteins/EF-1, EZH2, KIF11/EG5, EGFR, FANCG, FOS, GFAP, GOLGA2/GM130, GRASP1, UBE2A/hHR6A, HIST1H1 proteins/histone H1, HMGA1, HIVEP3/KRC, KAT5, LMNA, LMNB, LBR, LATS1, MAP1B, MAP4, MARCKS, MCM2, MCM4, MKLP1, MLST8, MYB, NEFH, NFIC, NPC/nuclear pore complex, PITPNM1/NIR2, NPM1, NCL, NUCKS1, NPM1/numatrin, ORC1, PRKAR2A, EEF1E1/p18, EIF3F/p47, p53/TP53, NONO/p54NRB, PAPOLA, PLEC/plectin, RB1, TPPP, UL40/R2, RAB4A, RAP1GAP, RBBP8/CtIP, RCC1, RPS6KB1/S6K1, KHDRBS1/SAM68, ESPL1, SKI, BIRC5/survivin, STIP1, TEX14, beta-tubulins, MAPT/TAU, NEDD1, VIM/vimentin, TK1, FOXO1, RUNX1/AML1, SAMHD1, SIRT2, CGAS and RUNX2. CDK1/CDC2-cyclin-B controls pronuclear union in interphase fertilized eggs. Essential for early stages of embryonic development. During G2 and early mitosis, CDC25A/B/C-mediated dephosphorylation activates CDK1/cyclin complexes which phosphorylate several substrates that trigger at least centrosome separation, Golgi dynamics, nuclear envelope breakdown and chromosome condensation. Once chromosomes are condensed and aligned at the metaphase plate, CDK1 activity is switched off by WEE1- and PKMYT1-mediated phosphorylation to allow sister chromatid separation, chromosome decondensation, reformation of the nuclear envelope and cytokinesis. Phosphorylates KRT5 during prometaphase and metaphase. Inactivated by PKR/EIF2AK2- and WEE1-mediated phosphorylation upon DNA damage to stop cell cycle and genome replication at the G2 checkpoint thus facilitating DNA repair. Reactivated after successful DNA repair through WIP1-dependent signaling leading to CDC25A/B/C-mediated dephosphorylation and restoring cell cycle progression. Catalyzes lamin (LMNA, LMNB1 and LMNB2) phosphorylation at the onset of mitosis, promoting nuclear envelope breakdown. In proliferating cells, CDK1-mediated FOXO1 phosphorylation at the G2-M phase represses FOXO1 interaction with 14-3-3 proteins and thereby promotes FOXO1 nuclear accumulation and transcription factor activity, leading to cell death of postmitotic neurons. The phosphorylation of beta-tubulins regulates microtubule dynamics during mitosis. NEDD1 phosphorylation promotes PLK1-mediated NEDD1 phosphorylation and subsequent targeting of the gamma-tubulin ring complex (gTuRC) to the centrosome, an important step for spindle formation. In addition, CC2D1A phosphorylation regulates CC2D1A spindle pole localization and association with SCC1/RAD21 and centriole cohesion during mitosis. The phosphorylation of Bcl-xL/BCL2L1 after prolongated G2 arrest upon DNA damage triggers apoptosis. In contrast, CASP8 phosphorylation during mitosis prevents its activation by proteolysis and subsequent apoptosis. This phosphorylation occurs in cancer cell lines, as well as in primary breast tissues and lymphocytes. EZH2 phosphorylation promotes H3K27me3 maintenance and epigenetic gene silencing. CALD1 phosphorylation promotes Schwann cell migration during peripheral nerve regeneration. CDK1-cyclin-B complex phosphorylates NCKAP5L and mediates its dissociation from centrosomes during mitosis. Regulates the amplitude of the cyclic expression of the core clock gene BMAL1 by phosphorylating its transcriptional repressor NR1D1, and this phosphorylation is necessary for SCF(FBXW7)-mediated ubiquitination and proteasomal degradation of NR1D1. Phosphorylates EML3 at 'Thr-881' which is essential for its interaction with HAUS augmin-like complex and TUBG1. Phosphorylates CGAS during mitosis, leading to its inhibition, thereby preventing CGAS activation by self DNA during mitosis. Phosphorylates SKA3 during mitosis which promotes SKA3 binding to the NDC80 complex and anchoring of the SKA complex to kinetochores, to enable stable attachment of mitotic spindle microtubules to kinetochores. This Pongo abelii (Sumatran orangutan) protein is Cyclin-dependent kinase 1 (CDK1).